A 296-amino-acid polypeptide reads, in one-letter code: DNA primase small subunit PriS (296 aa).

Catalysis depends on residues Asp-82, Asp-84, and Asp-191.

It belongs to the eukaryotic-type primase small subunit family. As to quaternary structure, heterodimer of a small subunit (PriS) and a large subunit (PriL). Mg(2+) is required as a cofactor. It depends on Mn(2+) as a cofactor.

Its function is as follows. Catalytic subunit of DNA primase, an RNA polymerase that catalyzes the synthesis of short RNA molecules used as primers for DNA polymerase during DNA replication. The small subunit contains the primase catalytic core and has DNA synthesis activity on its own. Binding to the large subunit stabilizes and modulates the activity, increasing the rate of DNA synthesis while decreasing the length of the DNA fragments, and conferring RNA synthesis capability. The DNA polymerase activity may enable DNA primase to also catalyze primer extension after primer synthesis. May also play a role in DNA repair. This Methanopyrus kandleri (strain AV19 / DSM 6324 / JCM 9639 / NBRC 100938) protein is DNA primase small subunit PriS.